The sequence spans 182 residues: MAVEPDKPGVDDPGPGRRLGLDVGTVRIGVAVSDRDARLAMPVETVRRETGFKDRDKDDIDRLLDLIHEYDAVEVAVGLPRDLKGNGSSSVKHAKEIAFRIRRRLAKDDRMKEPPPVRMVDERLTTVVATSALRASGVSEKRGRSVIDQAAAVEILQSWLDARHFALNGHSPSNVGDEVREP.

The protein belongs to the YqgF nuclease family.

It is found in the cytoplasm. In terms of biological role, could be a nuclease involved in processing of the 5'-end of pre-16S rRNA. This is Putative pre-16S rRNA nuclease from Corynebacterium aurimucosum (strain ATCC 700975 / DSM 44827 / CIP 107346 / CN-1) (Corynebacterium nigricans).